The chain runs to 100 residues: Aspartyl/glutamyl-tRNA(Asn/Gln) amidotransferase subunit C (100 aa).

This sequence belongs to the GatC family. Heterotrimer of A, B and C subunits.

It catalyses the reaction L-glutamyl-tRNA(Gln) + L-glutamine + ATP + H2O = L-glutaminyl-tRNA(Gln) + L-glutamate + ADP + phosphate + H(+). The enzyme catalyses L-aspartyl-tRNA(Asn) + L-glutamine + ATP + H2O = L-asparaginyl-tRNA(Asn) + L-glutamate + ADP + phosphate + 2 H(+). Functionally, allows the formation of correctly charged Asn-tRNA(Asn) or Gln-tRNA(Gln) through the transamidation of misacylated Asp-tRNA(Asn) or Glu-tRNA(Gln) in organisms which lack either or both of asparaginyl-tRNA or glutaminyl-tRNA synthetases. The reaction takes place in the presence of glutamine and ATP through an activated phospho-Asp-tRNA(Asn) or phospho-Glu-tRNA(Gln). The chain is Aspartyl/glutamyl-tRNA(Asn/Gln) amidotransferase subunit C from Streptococcus equi subsp. zooepidemicus (strain MGCS10565).